The sequence spans 351 residues: Dihydroorotate dehydrogenase (quinone) (351 aa).

FMN is bound by residues 61-65 (AGLDK) and threonine 85. Residue lysine 65 participates in substrate binding. A substrate-binding site is contributed by 110 to 114 (NRMGF). FMN-binding residues include asparagine 139 and asparagine 172. Asparagine 172 is a substrate binding site. Serine 175 acts as the Nucleophile in catalysis. Residue asparagine 177 coordinates substrate. FMN contacts are provided by lysine 217 and threonine 245. 246–247 (NT) contributes to the substrate binding site. Residues glycine 268, glycine 297, and 318 to 319 (YS) contribute to the FMN site.

The protein belongs to the dihydroorotate dehydrogenase family. Type 2 subfamily. Monomer. FMN is required as a cofactor.

It localises to the cell membrane. It catalyses the reaction (S)-dihydroorotate + a quinone = orotate + a quinol. It participates in pyrimidine metabolism; UMP biosynthesis via de novo pathway; orotate from (S)-dihydroorotate (quinone route): step 1/1. Catalyzes the conversion of dihydroorotate to orotate with quinone as electron acceptor. This chain is Dihydroorotate dehydrogenase (quinone), found in Xanthomonas axonopodis pv. citri (strain 306).